A 389-amino-acid polypeptide reads, in one-letter code: Lipopolysaccharide assembly protein B (389 aa).

A helical membrane pass occupies residues 1-20 (MLELLFLLLPVAAAYGWYMG). Residues 21-389 (RRSAQQNKQD…IKPIRGLDGL (369 aa)) are Cytoplasmic-facing. 7 TPR repeats span residues 35–68 (LSRDYVAGVNFLLSNQQDKAVDLFLDMLKEDTGT), 69–102 (VEAHLTLGNLFRSRGEVDRAIRIHQTLMESASLT), 107–140 (LLAIQQLGRDYMAAGLYDRAEDMFNQLTDETDFR), 142–174 (GALQQLLQIYQATSEWQKAIDVAERLVKLGKDK), 180–213 (AHFYCELALQHMASDDLDRAMTLLKKGAAADKNS), 214–247 (ARVSIMMGRVFMAKGEYAKAVESLQRVISQDREL), and 249–282 (SETLEMLQTCYQQLGKTAEWAEFLQRAVEENTGA). Residues cysteine 357, cysteine 360, cysteine 371, and cysteine 374 each coordinate Fe cation.

This sequence belongs to the LapB family.

Its subcellular location is the cell inner membrane. Modulates cellular lipopolysaccharide (LPS) levels by regulating LpxC, which is involved in lipid A biosynthesis. May act by modulating the proteolytic activity of FtsH towards LpxC. May also coordinate assembly of proteins involved in LPS synthesis at the plasma membrane. The chain is Lipopolysaccharide assembly protein B from Escherichia coli O157:H7.